The following is a 336-amino-acid chain: Acetyl-coenzyme A carboxylase carboxyl transferase subunit alpha (336 aa).

Positions 48–308 (ALEAKVESLR…KSMLIEELQG (261 aa)) constitute a CoA carboxyltransferase C-terminal domain.

It belongs to the AccA family. As to quaternary structure, acetyl-CoA carboxylase is a heterohexamer composed of biotin carboxyl carrier protein (AccB), biotin carboxylase (AccC) and two subunits each of ACCase subunit alpha (AccA) and ACCase subunit beta (AccD).

The protein localises to the cytoplasm. The enzyme catalyses N(6)-carboxybiotinyl-L-lysyl-[protein] + acetyl-CoA = N(6)-biotinyl-L-lysyl-[protein] + malonyl-CoA. Its pathway is lipid metabolism; malonyl-CoA biosynthesis; malonyl-CoA from acetyl-CoA: step 1/1. Functionally, component of the acetyl coenzyme A carboxylase (ACC) complex. First, biotin carboxylase catalyzes the carboxylation of biotin on its carrier protein (BCCP) and then the CO(2) group is transferred by the carboxyltransferase to acetyl-CoA to form malonyl-CoA. This chain is Acetyl-coenzyme A carboxylase carboxyl transferase subunit alpha, found in Chlorobaculum parvum (strain DSM 263 / NCIMB 8327) (Chlorobium vibrioforme subsp. thiosulfatophilum).